The following is a 297-amino-acid chain: tRNA dimethylallyltransferase (297 aa).

An ATP-binding site is contributed by 8 to 15 (GATASGKS). 10–15 (TASGKS) is a binding site for substrate. Residues 33–36 (DSLS) form an interaction with substrate tRNA region.

Belongs to the IPP transferase family. Monomer. Requires Mg(2+) as cofactor.

It catalyses the reaction adenosine(37) in tRNA + dimethylallyl diphosphate = N(6)-dimethylallyladenosine(37) in tRNA + diphosphate. Functionally, catalyzes the transfer of a dimethylallyl group onto the adenine at position 37 in tRNAs that read codons beginning with uridine, leading to the formation of N6-(dimethylallyl)adenosine (i(6)A). The polypeptide is tRNA dimethylallyltransferase (Sulfurimonas denitrificans (strain ATCC 33889 / DSM 1251) (Thiomicrospira denitrificans (strain ATCC 33889 / DSM 1251))).